Here is an 808-residue protein sequence, read N- to C-terminus: Protein tortoise (808 aa).

A coiled-coil region spans residues 43 to 78; that stretch reads KDRKELYSLNNDSIKKKLNQLKDETNQLLKERGEEL. Residues 152 to 171 form a disordered region; sequence LTSGGANKKKSPFLEDNNNK. Residues 694 to 733 adopt a coiled-coil conformation; that stretch reads EDLDFQIEELELMIKNKKILEREIKAHNEKISKIIKDSRD.

The protein localises to the mitochondrion. Its function is as follows. Required for efficient chemotaxis. The protein is Protein tortoise (torA) of Dictyostelium discoideum (Social amoeba).